The sequence spans 185 residues: Elongation factor P (185 aa).

This sequence belongs to the elongation factor P family.

The protein resides in the cytoplasm. It participates in protein biosynthesis; polypeptide chain elongation. Functionally, involved in peptide bond synthesis. Stimulates efficient translation and peptide-bond synthesis on native or reconstituted 70S ribosomes in vitro. Probably functions indirectly by altering the affinity of the ribosome for aminoacyl-tRNA, thus increasing their reactivity as acceptors for peptidyl transferase. The chain is Elongation factor P from Burkholderia vietnamiensis (strain G4 / LMG 22486) (Burkholderia cepacia (strain R1808)).